A 71-amino-acid polypeptide reads, in one-letter code: Exodeoxyribonuclease 7 small subunit (71 aa).

It belongs to the XseB family. As to quaternary structure, heterooligomer composed of large and small subunits.

It is found in the cytoplasm. It catalyses the reaction Exonucleolytic cleavage in either 5'- to 3'- or 3'- to 5'-direction to yield nucleoside 5'-phosphates.. Functionally, bidirectionally degrades single-stranded DNA into large acid-insoluble oligonucleotides, which are then degraded further into small acid-soluble oligonucleotides. This chain is Exodeoxyribonuclease 7 small subunit, found in Clostridium botulinum (strain Loch Maree / Type A3).